The primary structure comprises 201 residues: ATP-dependent Clp protease proteolytic subunit (201 aa).

The active-site Nucleophile is the Ser101. The active site involves His126.

It belongs to the peptidase S14 family. In terms of assembly, fourteen ClpP subunits assemble into 2 heptameric rings which stack back to back to give a disk-like structure with a central cavity, resembling the structure of eukaryotic proteasomes.

It is found in the cytoplasm. It catalyses the reaction Hydrolysis of proteins to small peptides in the presence of ATP and magnesium. alpha-casein is the usual test substrate. In the absence of ATP, only oligopeptides shorter than five residues are hydrolyzed (such as succinyl-Leu-Tyr-|-NHMec, and Leu-Tyr-Leu-|-Tyr-Trp, in which cleavage of the -Tyr-|-Leu- and -Tyr-|-Trp bonds also occurs).. Cleaves peptides in various proteins in a process that requires ATP hydrolysis. Has a chymotrypsin-like activity. Plays a major role in the degradation of misfolded proteins. The chain is ATP-dependent Clp protease proteolytic subunit from Francisella philomiragia subsp. philomiragia (strain ATCC 25017 / CCUG 19701 / FSC 153 / O#319-036).